A 557-amino-acid chain; its full sequence is Formate--tetrahydrofolate ligase 1 (557 aa).

Residue 66–73 (TPAGEGKT) coordinates ATP.

Belongs to the formate--tetrahydrofolate ligase family.

It catalyses the reaction (6S)-5,6,7,8-tetrahydrofolate + formate + ATP = (6R)-10-formyltetrahydrofolate + ADP + phosphate. It participates in one-carbon metabolism; tetrahydrofolate interconversion. In Streptococcus sanguinis (strain SK36), this protein is Formate--tetrahydrofolate ligase 1.